The chain runs to 1071 residues: Myosin IF heavy chain (1071 aa).

In terms of domain architecture, Myosin motor spans 40–736; it reads VGLTDMCFLE…TLFHFEELRQ (697 aa). Residue 134–141 coordinates ATP; sequence GESGSGKT. Positions 610–632 are actin-binding; that stretch reads INDLIGKLNTCQPHYIRCIKSNE. Residues 739-768 form the IQ domain; the sequence is LPSIVITIQRVWRGYKVRKWYKQELQRLRE. The TH1 domain occupies 870 to 1069; the sequence is SRKKEWDCRR…KGNTAIVYYN (200 aa).

The protein belongs to the TRAFAC class myosin-kinesin ATPase superfamily. Myosin family. Myosin I heavy chain is single-headed. Dimer of a heavy and a light chain. Inability to self-assemble into filaments.

In terms of biological role, myosin is a protein that binds to actin and has ATPase activity that is activated by actin. In Dictyostelium discoideum (Social amoeba), this protein is Myosin IF heavy chain (myoF).